The chain runs to 179 residues: uncharacterized protein (179 aa).

The segment covering 1–10 (ATLSAGQPAS) has biased composition (polar residues). Disordered stretches follow at residues 1–35 (ATLS…RGKC), 59–80 (VRRN…PIVT), and 131–179 (ECPT…STCR). A compositionally biased stretch (basic residues) spans 23 to 33 (LHRHPAPKRRG). The segment covering 149–158 (TPSRVRRSRR) has biased composition (basic residues).

This is an uncharacterized protein from Human cytomegalovirus (strain AD169) (HHV-5).